Here is a 119-residue protein sequence, read N- to C-terminus: Protein Wnt-4 (119 aa).

Residue serine 1 is the site of O-palmitoleoyl serine; by PORCN attachment. 2 disulfide bridges follow: cysteine 69–cysteine 100 and cysteine 85–cysteine 95. N-linked (GlcNAc...) asparagine glycosylation occurs at asparagine 86.

The protein belongs to the Wnt family. Post-translationally, palmitoleoylation is required for efficient binding to frizzled receptors. Depalmitoleoylation leads to Wnt signaling pathway inhibition.

The protein resides in the secreted. It localises to the extracellular space. It is found in the extracellular matrix. Ligand for members of the frizzled family of seven transmembrane receptors. Plays an important role in embryonic development. The protein is Protein Wnt-4 (WNT-4) of Plethodon jordani (Red-cheeked salamander).